Here is a 205-residue protein sequence, read N- to C-terminus: Octanoyltransferase (205 aa).

The BPL/LPL catalytic domain occupies asparagine 30–phenylalanine 205. Substrate is bound by residues arginine 68 to histidine 75, alanine 140 to glycine 142, and glycine 153 to alanine 155. Residue cysteine 171 is the Acyl-thioester intermediate of the active site.

It belongs to the LipB family.

It localises to the cytoplasm. It catalyses the reaction octanoyl-[ACP] + L-lysyl-[protein] = N(6)-octanoyl-L-lysyl-[protein] + holo-[ACP] + H(+). The protein operates within protein modification; protein lipoylation via endogenous pathway; protein N(6)-(lipoyl)lysine from octanoyl-[acyl-carrier-protein]: step 1/2. In terms of biological role, catalyzes the transfer of endogenously produced octanoic acid from octanoyl-acyl-carrier-protein onto the lipoyl domains of lipoate-dependent enzymes. Lipoyl-ACP can also act as a substrate although octanoyl-ACP is likely to be the physiological substrate. This is Octanoyltransferase from Wolbachia sp. subsp. Brugia malayi (strain TRS).